The sequence spans 380 residues: Outer membrane protein assembly factor BamB (380 aa).

The N-terminal stretch at Met1 to Gly18 is a signal peptide. A lipid anchor (N-palmitoyl cysteine) is attached at Cys19. Cys19 carries S-diacylglycerol cysteine lipidation.

The protein belongs to the BamB family. In terms of assembly, part of the Bam complex.

Its subcellular location is the cell outer membrane. Functionally, part of the outer membrane protein assembly complex, which is involved in assembly and insertion of beta-barrel proteins into the outer membrane. This chain is Outer membrane protein assembly factor BamB, found in Pseudomonas aeruginosa (strain ATCC 15692 / DSM 22644 / CIP 104116 / JCM 14847 / LMG 12228 / 1C / PRS 101 / PAO1).